The sequence spans 274 residues: Large ribosomal subunit protein uL2 (274 aa).

The interval 224–259 is disordered; the sequence is AMNPVDHPHGGGEGRTSGGRHPVTPWGIPTKGYKTR.

This sequence belongs to the universal ribosomal protein uL2 family. As to quaternary structure, part of the 50S ribosomal subunit. Forms a bridge to the 30S subunit in the 70S ribosome.

Its function is as follows. One of the primary rRNA binding proteins. Required for association of the 30S and 50S subunits to form the 70S ribosome, for tRNA binding and peptide bond formation. It has been suggested to have peptidyltransferase activity; this is somewhat controversial. Makes several contacts with the 16S rRNA in the 70S ribosome. This is Large ribosomal subunit protein uL2 from Geobacter sp. (strain M21).